Consider the following 108-residue polypeptide: UPF0235 protein RB8260 (108 aa).

The protein belongs to the UPF0235 family.

This Rhodopirellula baltica (strain DSM 10527 / NCIMB 13988 / SH1) protein is UPF0235 protein RB8260.